Here is a 162-residue protein sequence, read N- to C-terminus: Interleukin-15 (162 aa).

The first 29 residues, 1–29 (MRISKPHLRSVSIQCYLCLLLNSHFLTEA), serve as a signal peptide directing secretion. A propeptide spanning residues 30-48 (GIHVFILGCFSAGLPKTEA) is cleaved from the precursor. 2 cysteine pairs are disulfide-bonded: Cys83/Cys133 and Cys90/Cys136. N-linked (GlcNAc...) asparagine glycosylation occurs at Asn127.

This sequence belongs to the IL-15/IL-21 family.

It localises to the secreted. In terms of biological role, cytokine that plays a major role in the development of inflammatory and protective immune responses to microbial invaders and parasites by modulating immune cells of both the innate and adaptive immune systems. Stimulates the proliferation of natural killer cells, T-cells and B-cells and promotes the secretion of several cytokines. In monocytes, induces the production of IL8 and monocyte chemotactic protein 1/CCL2, two chemokines that attract neutrophils and monocytes respectively to sites of infection. Unlike most cytokines, which are secreted in soluble form, IL15 is expressed in association with its high affinity IL15RA on the surface of IL15-producing cells and delivers signals to target cells that express IL2RB and IL2RG receptor subunits. Binding to its receptor triggers the phosphorylation of JAK1 and JAK3 and the recruitment and subsequent phosphorylation of signal transducer and activator of transcription-3/STAT3 and STAT5. In mast cells, induces the rapid tyrosine phosphorylation of STAT6 and thereby controls mast cell survival and release of cytokines such as IL4. This Macaca mulatta (Rhesus macaque) protein is Interleukin-15 (IL15).